Here is a 103-residue protein sequence, read N- to C-terminus: Large ribosomal subunit protein uL24 (103 aa).

The protein belongs to the universal ribosomal protein uL24 family. As to quaternary structure, part of the 50S ribosomal subunit.

Functionally, one of two assembly initiator proteins, it binds directly to the 5'-end of the 23S rRNA, where it nucleates assembly of the 50S subunit. Its function is as follows. One of the proteins that surrounds the polypeptide exit tunnel on the outside of the subunit. This is Large ribosomal subunit protein uL24 from Agathobacter rectalis (strain ATCC 33656 / DSM 3377 / JCM 17463 / KCTC 5835 / VPI 0990) (Eubacterium rectale).